A 134-amino-acid polypeptide reads, in one-letter code: Putative F-box protein R638 (134 aa).

One can recognise an F-box domain in the interval 5–52 (NIMNLLNEDCILHILSFLADKDKIQLSLSCKSNLKFLHKTIYDDIYFY).

The chain is Putative F-box protein R638 from Acanthamoeba polyphaga mimivirus (APMV).